Here is a 329-residue protein sequence, read N- to C-terminus: MSNSSCADEDLIIRFDSLNQKAAQFVYLLAIILTFITTYFAVKILFTQSFFEISTKILLVQNLFYANLYQFFHGIEAVRMLYKSFFMINDPCNFMEPEIECVFYYKIILMGSSGMVYGQTGLLIERLCATFSKDYKKKQSAIKCAVISILVLICSSSTGRLIVWDDPIDKYNFACYIPPKESYIRANHYFTMCAVLSTINFCISTFILKYNKRCEYQTRFKVGARFQKQELIESTKAICFLTVSQFVAVFLNSFGMIVLVYIQESISHRIFNLLVVWLYAFPIVVLMFPVILVHQIRSSRWRRALKIKVIKNEKQTQDDHMKHMKNMWI.

A run of 7 helical transmembrane segments spans residues 25–45 (FVYL…VKIL), 57–77 (ILLV…GIEA), 104–124 (YYKI…GLLI), 144–164 (CAVI…LIVW), 188–208 (HYFT…TFIL), 240–260 (FLTV…IVLV), and 273–293 (LLVV…VILV).

It belongs to the nematode receptor-like protein sra family.

Its subcellular location is the membrane. In Caenorhabditis elegans, this protein is Serpentine receptor class alpha-2 (sra-2).